The chain runs to 773 residues: FT-interacting protein 3 (773 aa).

Residues 1 to 16 show a composition bias toward basic and acidic residues; it reads MQRPPPEDFSLKETRP. Residues 1-24 form a disordered region; sequence MQRPPPEDFSLKETRPHLGGGKLS. C2 domains are found at residues 22-142, 181-305, and 345-471; these read KLSG…PQWY, VSGT…SRWY, and YSSD…THSY. 5 residues coordinate Ca(2+): Asp-55, Asp-61, Asp-108, Asp-110, and Asp-115. 3 helical membrane passes run 574 to 594, 608 to 628, and 716 to 736; these read IMGVLSGLIAVGKWFEQICNW, IILVLYPELILPTIFLYLFLI, and LFVLFCLIAAVILYVTPFQVV.

This sequence belongs to the MCTP family. In terms of assembly, interacts with and regulates subcellular localization and trafficking of STM. Requires Ca(2+) as cofactor. As to expression, accumulates in vascular tissues, leaf primordia and flowers. Highly expressed in roots meristems and in both vegetative and inflorescence shoot apical meristems (SAMs).

The protein resides in the endoplasmic reticulum membrane. Its subcellular location is the cytoplasm. The protein localises to the vesicle. It is found in the cell membrane. It localises to the endosome membrane. The protein resides in the golgi apparatus membrane. Required for proliferation and differentiation of shoot stem cells in the shoot apical meristem (SAM), thus determining the appropriate balance between the maintenance of shoot stem cells and their differentiation into other aboveground plant parts via the control of subcellular localization and intercellular trafficking of STM in the shoot apex. Prevents intracellular trafficking of STM to the plasma membrane in cells in the peripheral shoot meristem region thus facilitating STM recycling to the nucleus to maintain stem cells. May function as a signaling molecule by regulating the trafficking of other regulators. In Arabidopsis thaliana (Mouse-ear cress), this protein is FT-interacting protein 3.